Reading from the N-terminus, the 380-residue chain is GPI-anchor transamidase (380 aa).

The signal sequence occupies residues 1-19 (MIVQFVALLLLNLLQIIAA). Over 20-354 (ESSHTNNWAV…TRELKYKKHP (335 aa)) the chain is Lumenal. Residues His145 and Cys187 contribute to the active site. Asn307 carries N-linked (GlcNAc...) asparagine glycosylation. A helical transmembrane segment spans residues 355 to 375 (ISRIISAVVCISFSIGFPYYA). Over 376-380 (SKYLK) the chain is Cytoplasmic.

The protein belongs to the peptidase C13 family. In terms of assembly, forms a complex with PIG-T homolog, PIG-U homolog and PIG-S homolog. The disulfide bond between PIGK/GPI8 and PIGT is important for normal enzyme activity.

The protein resides in the endoplasmic reticulum membrane. Its pathway is glycolipid biosynthesis; glycosylphosphatidylinositol-anchor biosynthesis. Functionally, mediates GPI anchoring in the endoplasmic reticulum, by replacing a protein's C-terminal GPI attachment signal peptide with a pre-assembled GPI. During this transamidation reaction, the GPI transamidase forms a carbonyl intermediate with the substrate protein. The sequence is that of GPI-anchor transamidase (gpi8) from Schizosaccharomyces pombe (strain 972 / ATCC 24843) (Fission yeast).